A 138-amino-acid polypeptide reads, in one-letter code: Small ribosomal subunit protein uS12m (138 aa).

The transit peptide at 1–29 (MSWSGLLHGLNTSLTCGPALVPRLWATCS) directs the protein to the mitochondrion. The tract at residues 36–56 (MHRLGPPKRPPRKLGPTEGRP) is disordered.

The protein belongs to the universal ribosomal protein uS12 family. As to quaternary structure, component of the mitochondrial small ribosomal subunit (mt-SSU). Mature mammalian 55S mitochondrial ribosomes consist of a small (28S) and a large (39S) subunit. The 28S small subunit contains a 12S ribosomal RNA (12S mt-rRNA) and 30 different proteins. The 39S large subunit contains a 16S rRNA (16S mt-rRNA), a copy of mitochondrial valine transfer RNA (mt-tRNA(Val)), which plays an integral structural role, and 52 different proteins.

Its subcellular location is the mitochondrion. This is Small ribosomal subunit protein uS12m (MRPS12) from Homo sapiens (Human).